Consider the following 277-residue polypeptide: Large ribosomal subunit protein uL2 (277 aa).

The segment at 222 to 277 is disordered; it reads GVAMNPVDHPHGGGEGRTSGGRHPVSPWGKPTKGKRTRSNKATDKFIMRTRHQRKK.

It belongs to the universal ribosomal protein uL2 family. In terms of assembly, part of the 50S ribosomal subunit. Forms a bridge to the 30S subunit in the 70S ribosome.

One of the primary rRNA binding proteins. Required for association of the 30S and 50S subunits to form the 70S ribosome, for tRNA binding and peptide bond formation. It has been suggested to have peptidyltransferase activity; this is somewhat controversial. Makes several contacts with the 16S rRNA in the 70S ribosome. This is Large ribosomal subunit protein uL2 from Bartonella henselae (strain ATCC 49882 / DSM 28221 / CCUG 30454 / Houston 1) (Rochalimaea henselae).